Here is a 40-residue protein sequence, read N- to C-terminus: Beta-defensin 1 (40 aa).

Intrachain disulfides connect cysteine 7–cysteine 35, cysteine 14–cysteine 29, and cysteine 19–cysteine 36. Glycine 40 bears the Glycine amide mark.

Monomer. Homodimer.

It localises to the secreted. Its subcellular location is the membrane. In terms of biological role, has antimicrobial activity against the Gram-positive bacteria methicillin-resistant S.aureus ATCC 33591 and L.monocytogenes EGD, the Gram-negative bacterium E.coli ML53p and the yeast C.albicans 820. Has no hemolytic activity towards human erythrocytes. This chain is Beta-defensin 1, found in Emys orbicularis (European pond turtle).